The sequence spans 649 residues: L-ornithine N(5)-monooxygenase (649 aa).

FAD is bound by residues 72–80 (EKRGHFAWH) and glutamine 91. Substrate is bound at residue lysine 96. Valine 157 is a binding site for FAD. Residues 289–292 (AGQS) and arginine 314 contribute to the NADP(+) site. Substrate contacts are provided by residues 328 to 331 (NSAA) and asparagine 359. 359–361 (NYS) contributes to the NADP(+) binding site. The disordered stretch occupies residues 512-547 (AMQSDAVRSGKSSPGSGSDASSTSSQQTLASENSTE). A compositionally biased stretch (low complexity) spans 520-536 (SGKSSPGSGSDASSTSS). Polar residues predominate over residues 537–547 (QQTLASENSTE). FAD is bound at residue 569 to 571 (SLL). Residue serine 572 participates in substrate binding. Positions 585–611 (LLQRLPRTRRGTASSAATQPAASTVAS) are disordered. A compositionally biased stretch (low complexity) spans 596-611 (TASSAATQPAASTVAS).

It belongs to the lysine N(6)-hydroxylase/L-ornithine N(5)-oxygenase family. Homotetramer. The cofactor is FAD.

It carries out the reaction L-ornithine + NADPH + O2 = N(5)-hydroxy-L-ornithine + NADP(+) + H2O. It catalyses the reaction L-ornithine + NADH + O2 = N(5)-hydroxy-L-ornithine + NAD(+) + H2O. It participates in siderophore biosynthesis; ferrichrome biosynthesis. Its function is as follows. Catalyzes the conversion of L-ornithine to N(5)-hydroxyornithine, the first step in the biosynthesis of all hydroxamate-containing siderophores, such as ferrichrome. The chain is L-ornithine N(5)-monooxygenase (SID1) from Mycosarcoma maydis (Corn smut fungus).